The sequence spans 420 residues: Bicoumarin synthase ktnC (420 aa).

Cys-362 serves as a coordination point for heme.

It belongs to the cytochrome P450 family. Requires heme as cofactor.

The enzyme catalyses 2 7-demethylsiderin + NADPH + O2 = orlandin + NADP(+) + 2 H2O. It functions in the pathway secondary metabolite biosynthesis. In terms of biological role, non-reducing polyketide synthase; part of the gene cluster that mediates the biosynthesis of the bicoumarin kotanin. The non-reducing polyketide synthase ktnS first catalyzes the formation of the pentaketidic 4,7-dihydroxy-5-methylcoumarin from acetyl coenzyme A and 4 malonyl coenzyme A molecules. Further O-methylation by ktnB leads to the formation of 7-demethylsiderin. Then, an oxidative phenol coupling catalyzed by the cytochrome P450 monooxygenase ktnC forms the 8,8'-dimer P-orlandin via dimerization the monomeric precursor, 7-demethylsiderin. P-orlandin is subsequently O-methylated in a stepwise fashion to demethylkotanin and kotanin. The chain is Bicoumarin synthase ktnC from Aspergillus niger (strain ATCC MYA-4892 / CBS 513.88 / FGSC A1513).